Here is a 117-residue protein sequence, read N- to C-terminus: Protein OPG035 (117 aa).

The protein belongs to the poxviridae OPG035 family.

Its function is as follows. Bcl-2-like protein which contributes to virulence by preventing host NF-kappa-B activation in response to pro-inflammatory stimuli such as TNF-alpha or IL1B. The polypeptide is Protein OPG035 (OPG035) (Homo sapiens (Human)).